The sequence spans 290 residues: Type II secretion system protein C (290 aa).

Over Met1–Pro28 the chain is Cytoplasmic. A helical membrane pass occupies residues Leu29–Trp46. Topologically, residues Arg47–Glu290 are periplasmic.

It belongs to the GSP C family.

It is found in the cell inner membrane. Functionally, involved in a type II secretion system (T2SS, formerly general secretion pathway, GSP) for the export of proteins. The sequence is that of Type II secretion system protein C (exeC) from Aeromonas hydrophila.